A 366-amino-acid chain; its full sequence is uncharacterized protein (366 aa).

The Proton donor role is filled by Glu-139. Glu-249 (nucleophile) is an active-site residue.

This sequence belongs to the glycosyl hydrolase 53 family.

This is an uncharacterized protein from Niallia circulans (Bacillus circulans).